The chain runs to 1240 residues: Ubiquitin carboxyl-terminal hydrolase 36 (1240 aa).

Disordered regions lie at residues 37–56 (AKTSNGGGDGSSTSGSSTDN) and 100–144 (SNGG…GTSA). Low complexity-rich tracts occupy residues 47–56 (SSTSGSSTDN) and 101–132 (NGGAASNGNGNYNGSNKTNGKFGAGNGHDNNG). A USP domain is found at 202 to 512 (TGMLNVGNTC…NAYIMFYELD (311 aa)). C211 acts as the Nucleophile in catalysis. Catalysis depends on H471, which acts as the Proton acceptor. The interval 637 to 705 (ANKSSCNTLN…KMFEESSESV (69 aa)) is disordered. Over residues 639-649 (KSSCNTLNNSK) the composition is skewed to polar residues. Residues 650-662 (QHQPQQQQQQPQH) show a composition bias toward low complexity. A compositionally biased stretch (acidic residues) spans 668–680 (SDEEEDSDDDNDN). Position 715 is a phosphothreonine (T715). Disordered regions lie at residues 723-818 (YESA…KQKT), 831-998 (YKNK…GESL), 1076-1163 (DMSS…EYES), and 1198-1240 (RFAG…QQQS). 2 positions are modified to phosphoserine: S725 and S727. The segment covering 733–744 (QQQQQQQTLQQQ) has biased composition (low complexity). A compositionally biased stretch (acidic residues) spans 759-769 (SDTDDDDDEEQ). Residues 794–815 (NSSSSKTKSASNASSANVNSSK) show a composition bias toward low complexity. The segment covering 843 to 859 (DDDDDDDEDEDEDEDEA) has biased composition (acidic residues). Residues 869 to 879 (TKSSSSSSSTS) show a composition bias toward low complexity. Residues 880-890 (LTNGWQQSQNG) are compositionally biased toward polar residues. Phosphoserine is present on S895. T898 carries the post-translational modification Phosphothreonine. S901 carries the phosphoserine modification. The segment covering 918–941 (DEDDDENVDGVADADDDDDNDEVA) has biased composition (acidic residues). The span at 976 to 988 (LNGSSKSQQTTPR) shows a compositional bias: polar residues. The span at 1076-1103 (DMSSSSSSSSSTNSSSNSSSRSNGNSSN) shows a compositional bias: low complexity. A compositionally biased stretch (basic and acidic residues) spans 1111-1120 (AEAREQRKRD). The span at 1231-1240 (QSSGQQQQQS) shows a compositional bias: low complexity.

It belongs to the peptidase C19 family. In terms of assembly, interacts with atms/PAF1, but not with CycT.

The protein localises to the nucleus. It is found in the nucleolus. The catalysed reaction is Thiol-dependent hydrolysis of ester, thioester, amide, peptide and isopeptide bonds formed by the C-terminal Gly of ubiquitin (a 76-residue protein attached to proteins as an intracellular targeting signal).. Its function is as follows. Required for maintaining multiple types of adult stem cells, including male and female germline, epithelial follicle cell and intestinal stem cells. May function as a transcriptional repressor by continually deubiquiting histone H2B at the promoters of genes critical for cellular differentiation, thereby preventing histone H3 'Lys-4' trimethylation (H3K4). Controls selective autophagy activation by ubiquitinated proteins. The chain is Ubiquitin carboxyl-terminal hydrolase 36 (Usp36) from Drosophila grimshawi (Hawaiian fruit fly).